The chain runs to 192 residues: Flagellar transcriptional regulator FlhC (192 aa).

Zn(2+) contacts are provided by Cys-137, Cys-140, Cys-157, and Cys-160.

This sequence belongs to the FlhC family. Heterohexamer composed of two FlhC and four FlhD subunits. Each FlhC binds a FlhD dimer, forming a heterotrimer, and a hexamer assembles by dimerization of two heterotrimers. It depends on Zn(2+) as a cofactor.

It is found in the cytoplasm. Its function is as follows. Functions in complex with FlhD as a master transcriptional regulator that regulates transcription of several flagellar and non-flagellar operons by binding to their promoter region. Activates expression of class 2 flagellar genes, including fliA, which is a flagellum-specific sigma factor that turns on the class 3 genes. Also regulates genes whose products function in a variety of physiological pathways. In Escherichia coli O6:H1 (strain CFT073 / ATCC 700928 / UPEC), this protein is Flagellar transcriptional regulator FlhC.